The sequence spans 146 residues: 3-dehydroquinate dehydratase (146 aa).

Catalysis depends on Y24, which acts as the Proton acceptor. 3 residues coordinate substrate: N75, H81, and D88. H101 serves as the catalytic Proton donor. Substrate contacts are provided by residues 102 to 103 (LS) and R112.

Belongs to the type-II 3-dehydroquinase family. Homododecamer.

It carries out the reaction 3-dehydroquinate = 3-dehydroshikimate + H2O. The protein operates within metabolic intermediate biosynthesis; chorismate biosynthesis; chorismate from D-erythrose 4-phosphate and phosphoenolpyruvate: step 3/7. Functionally, catalyzes a trans-dehydration via an enolate intermediate. The chain is 3-dehydroquinate dehydratase from Maricaulis maris (strain MCS10) (Caulobacter maris).